Consider the following 376-residue polypeptide: Succinyl-diaminopimelate desuccinylase (376 aa).

His-67 is a Zn(2+) binding site. Asp-69 is a catalytic residue. Zn(2+) is bound at residue Asp-100. Residue Glu-134 is the Proton acceptor of the active site. 3 residues coordinate Zn(2+): Glu-135, Glu-163, and His-349.

Belongs to the peptidase M20A family. DapE subfamily. As to quaternary structure, homodimer. Requires Zn(2+) as cofactor. Co(2+) is required as a cofactor.

The enzyme catalyses N-succinyl-(2S,6S)-2,6-diaminopimelate + H2O = (2S,6S)-2,6-diaminopimelate + succinate. The protein operates within amino-acid biosynthesis; L-lysine biosynthesis via DAP pathway; LL-2,6-diaminopimelate from (S)-tetrahydrodipicolinate (succinylase route): step 3/3. Functionally, catalyzes the hydrolysis of N-succinyl-L,L-diaminopimelic acid (SDAP), forming succinate and LL-2,6-diaminopimelate (DAP), an intermediate involved in the bacterial biosynthesis of lysine and meso-diaminopimelic acid, an essential component of bacterial cell walls. The polypeptide is Succinyl-diaminopimelate desuccinylase (Proteus mirabilis (strain HI4320)).